We begin with the raw amino-acid sequence, 204 residues long: Ribosomal RNA small subunit methyltransferase G (204 aa).

Residues G73, F78, and R139 each coordinate S-adenosyl-L-methionine.

Belongs to the methyltransferase superfamily. RNA methyltransferase RsmG family.

The protein resides in the cytoplasm. The catalysed reaction is guanosine(527) in 16S rRNA + S-adenosyl-L-methionine = N(7)-methylguanosine(527) in 16S rRNA + S-adenosyl-L-homocysteine. Specifically methylates the N7 position of guanine in position 527 of 16S rRNA. This Coxiella burnetii (strain CbuG_Q212) (Coxiella burnetii (strain Q212)) protein is Ribosomal RNA small subunit methyltransferase G.